The chain runs to 466 residues: 3-isopropylmalate dehydratase large subunit (466 aa).

Cys-347, Cys-407, and Cys-410 together coordinate [4Fe-4S] cluster.

Belongs to the aconitase/IPM isomerase family. LeuC type 1 subfamily. As to quaternary structure, heterodimer of LeuC and LeuD. [4Fe-4S] cluster is required as a cofactor.

The catalysed reaction is (2R,3S)-3-isopropylmalate = (2S)-2-isopropylmalate. It functions in the pathway amino-acid biosynthesis; L-leucine biosynthesis; L-leucine from 3-methyl-2-oxobutanoate: step 2/4. In terms of biological role, catalyzes the isomerization between 2-isopropylmalate and 3-isopropylmalate, via the formation of 2-isopropylmaleate. The protein is 3-isopropylmalate dehydratase large subunit of Escherichia coli O45:K1 (strain S88 / ExPEC).